Reading from the N-terminus, the 92-residue chain is Small ribosomal subunit protein uS19 (92 aa).

It belongs to the universal ribosomal protein uS19 family.

Protein S19 forms a complex with S13 that binds strongly to the 16S ribosomal RNA. This Sinorhizobium medicae (strain WSM419) (Ensifer medicae) protein is Small ribosomal subunit protein uS19.